The following is a 317-amino-acid chain: Putative 2-hydroxyacid dehydrogenase SERP1888 (317 aa).

NAD(+) contacts are provided by residues 155 to 156 (EI), 234 to 236 (AGR), and aspartate 260. Arginine 236 is a catalytic residue. Residue glutamate 265 is part of the active site. Histidine 283 acts as the Proton donor in catalysis. 283–286 (HIGN) provides a ligand contact to NAD(+).

It belongs to the D-isomer specific 2-hydroxyacid dehydrogenase family.

In Staphylococcus epidermidis (strain ATCC 35984 / DSM 28319 / BCRC 17069 / CCUG 31568 / BM 3577 / RP62A), this protein is Putative 2-hydroxyacid dehydrogenase SERP1888.